A 299-amino-acid polypeptide reads, in one-letter code: Protoheme IX farnesyltransferase (299 aa).

9 consecutive transmembrane segments (helical) span residues 27–47, 53–73, 97–117, 121–141, 149–169, 175–195, 222–242, 244–264, and 273–293; these read VVALMLLTSVVGMSLAPHEHF, LIALVGIALMAGSAAAFNHLI, FNVLLFALLIGSLGFLSLMLW, LTAYLTFASLLGYAVVYTLYL, IVIAGIAGAMPPLLGWTSITG, AWLLVMIIFIWTPPHFWALAI, ILLYAILLALVCMLPVLVGMA, YLYLFSALVLNVCFVRYAIKL, and AIEMFRFSIYFLLLLFCALLL.

The protein belongs to the UbiA prenyltransferase family. Protoheme IX farnesyltransferase subfamily.

Its subcellular location is the cell inner membrane. It catalyses the reaction heme b + (2E,6E)-farnesyl diphosphate + H2O = Fe(II)-heme o + diphosphate. It participates in porphyrin-containing compound metabolism; heme O biosynthesis; heme O from protoheme: step 1/1. In terms of biological role, converts heme B (protoheme IX) to heme O by substitution of the vinyl group on carbon 2 of heme B porphyrin ring with a hydroxyethyl farnesyl side group. The polypeptide is Protoheme IX farnesyltransferase (Vibrio vulnificus (strain YJ016)).